The chain runs to 150 residues: Catabolic 3-dehydroquinase (150 aa).

Tyr24 acts as the Proton acceptor in catalysis. Substrate is bound by residues Asn75, His81, and Asp88. His101 (proton donor) is an active-site residue. Substrate is bound by residues 102–103 (IS) and Arg112.

The protein belongs to the type-II 3-dehydroquinase family. In terms of assembly, homododecamer. Adopts a ring-like structure, composed of an arrangement of two hexameric rings stacked on top of one another.

The enzyme catalyses 3-dehydroquinate = 3-dehydroshikimate + H2O. It participates in aromatic compound metabolism; 3,4-dihydroxybenzoate biosynthesis; 3,4-dihydroxybenzoate from 3-dehydroquinate: step 1/2. Its function is as follows. Is involved in the catabolism of quinate. Allows the utilization of quinate as carbon source via the beta-ketoadipate pathway. The polypeptide is Catabolic 3-dehydroquinase (Verticillium alfalfae (strain VaMs.102 / ATCC MYA-4576 / FGSC 10136) (Verticillium wilt of alfalfa)).